Consider the following 494-residue polypeptide: Ribose import ATP-binding protein RbsA (494 aa).

2 ABC transporter domains span residues 2-239 (IDMR…VGRQ) and 251-493 (IGEE…TGGN). 34-41 (GENGAGKS) lines the ATP pocket.

It belongs to the ABC transporter superfamily. Ribose importer (TC 3.A.1.2.1) family. In terms of assembly, the complex is composed of an ATP-binding protein (RbsA), two transmembrane proteins (RbsC) and a solute-binding protein (RbsB).

It localises to the cell membrane. It carries out the reaction D-ribose(out) + ATP + H2O = D-ribose(in) + ADP + phosphate + H(+). Its function is as follows. Part of the ABC transporter complex RbsABC involved in ribose import. Responsible for energy coupling to the transport system. This chain is Ribose import ATP-binding protein RbsA, found in Geobacillus kaustophilus (strain HTA426).